The chain runs to 169 residues: Pyrophosphate-energized proton pump 1 (169 aa).

3 helical membrane-spanning segments follow: residues 45-65 (YVVAGLLFGGLIPYLFGGIAM), 114-134 (VIPSLLPVLAPLVVYFGVLLI), and 141-161 (AFAALGAYLLAVIMNRVLVAI).

It belongs to the H(+)-translocating pyrophosphatase (TC 3.A.10) family. Homodimer. Mg(2+) is required as a cofactor.

It is found in the cell inner membrane. It carries out the reaction diphosphate + H2O + H(+)(in) = 2 phosphate + 2 H(+)(out). Functionally, proton pump that utilizes the energy of pyrophosphate hydrolysis as the driving force for proton movement across the membrane. Generates a proton motive force. The protein is Pyrophosphate-energized proton pump 1 (hppA1) of Rhizobium leguminosarum bv. trifolii.